A 396-amino-acid chain; its full sequence is Bone morphogenetic protein 2 (396 aa).

Residues 1–23 form the signal peptide; sequence MVAGTRCLLALLLPQVLLGGAAG. Positions 24-282 are cleaved as a propeptide — cleaved by PCSK5; the sequence is LVPELGRRKF…GHPLHKREKR (259 aa). The segment at 84–121 is disordered; the sequence is RRHSGQPGSPAPDHRLERAASRANTVRSFHHEESLEEL. S87 bears the Phosphoserine mark. 4 N-linked (GlcNAc...) asparagine glycosylation sites follow: N135, N163, N164, and N200. The interval 271–293 is disordered; sequence GKGHPLHKREKRQAKHKQRKRLK. A compositionally biased stretch (basic residues) spans 274–293; that stretch reads HPLHKREKRQAKHKQRKRLK. 3 disulfide bridges follow: C296–C361, C325–C393, and C329–C395. N-linked (GlcNAc...) (high mannose) asparagine glycosylation occurs at N338.

It belongs to the TGF-beta family. As to quaternary structure, homodimer; disulfide-linked. Interacts with SOSTDC1. Interacts with GREM2, RGMA, RGMB and RGMC. Interacts with ASPN. Interacts with MAFP5. Interacts with FBN1 (via N-terminal domain) and FBN2. Interacts with type I receptor BMPR1A. Interacts with type II receptor BMPR2. Interacts with SCUBE3. Interacts with TNFAIP6 (primarily via Link domain); this interaction is inhibited by hyaluronan. Interacts with ERFE. Interacts with BMPR1A/ALK3; the interaction may induce HAMP expression. Forms heterodimers with BMP6 in vitro; the heterodimer then binds to its receptor BMPR1A /ALK3 and may induce HAMP expression. Interacts with TGFBR3. Particularly abundant in lung, spleen and colon and in low but significant levels in heart, brain, placenta, liver, skeletal muscle, kidney, pancreas, prostate, ovary and small intestine.

It localises to the secreted. Growth factor of the TGF-beta superfamily that plays essential roles in many developmental processes, including cardiogenesis, neurogenesis, and osteogenesis. Induces cartilage and bone formation. Initiates the canonical BMP signaling cascade by associating with type I receptor BMPR1A and type II receptor BMPR2. Once all three components are bound together in a complex at the cell surface, BMPR2 phosphorylates and activates BMPR1A. In turn, BMPR1A propagates signal by phosphorylating SMAD1/5/8 that travel to the nucleus and act as activators and repressors of transcription of target genes. Also acts to promote expression of HAMP, via the interaction with its receptor BMPR1A/ALK3. Can also signal through non-canonical pathways such as ERK/MAP kinase signaling cascade that regulates osteoblast differentiation. Also stimulates the differentiation of myoblasts into osteoblasts via the EIF2AK3-EIF2A-ATF4 pathway by stimulating EIF2A phosphorylation which leads to increased expression of ATF4 which plays a central role in osteoblast differentiation. Acts as a positive regulator of odontoblast differentiation during mesenchymal tooth germ formation, expression is repressed during the bell stage by MSX1-mediated inhibition of CTNNB1 signaling. The sequence is that of Bone morphogenetic protein 2 (BMP2) from Homo sapiens (Human).